A 355-amino-acid chain; its full sequence is Elongation factor Ts (355 aa).

Residues 82 to 85 (TDFV) are involved in Mg(2+) ion dislocation from EF-Tu.

It belongs to the EF-Ts family.

The protein resides in the cytoplasm. Functionally, associates with the EF-Tu.GDP complex and induces the exchange of GDP to GTP. It remains bound to the aminoacyl-tRNA.EF-Tu.GTP complex up to the GTP hydrolysis stage on the ribosome. The sequence is that of Elongation factor Ts from Helicobacter pylori (strain Shi470).